The following is a 538-amino-acid chain: Bifunctional purine biosynthesis protein PurH (538 aa).

Positions 11 to 158 (PDLHRVRRAL…KNHAYTGVVT (148 aa)) constitute an MGS-like domain.

It belongs to the PurH family.

The catalysed reaction is (6R)-10-formyltetrahydrofolate + 5-amino-1-(5-phospho-beta-D-ribosyl)imidazole-4-carboxamide = 5-formamido-1-(5-phospho-D-ribosyl)imidazole-4-carboxamide + (6S)-5,6,7,8-tetrahydrofolate. The enzyme catalyses IMP + H2O = 5-formamido-1-(5-phospho-D-ribosyl)imidazole-4-carboxamide. Its pathway is purine metabolism; IMP biosynthesis via de novo pathway; 5-formamido-1-(5-phospho-D-ribosyl)imidazole-4-carboxamide from 5-amino-1-(5-phospho-D-ribosyl)imidazole-4-carboxamide (10-formyl THF route): step 1/1. It functions in the pathway purine metabolism; IMP biosynthesis via de novo pathway; IMP from 5-formamido-1-(5-phospho-D-ribosyl)imidazole-4-carboxamide: step 1/1. This chain is Bifunctional purine biosynthesis protein PurH, found in Bartonella bacilliformis (strain ATCC 35685 / KC583 / Herrer 020/F12,63).